The chain runs to 318 residues: Replication factor C small subunit (318 aa).

43–50 (GSVGTGKT) provides a ligand contact to ATP.

Belongs to the activator 1 small subunits family. RfcS subfamily. As to quaternary structure, heteromultimer composed of small subunits (RfcS) and large subunits (RfcL).

Its function is as follows. Part of the RFC clamp loader complex which loads the PCNA sliding clamp onto DNA. The protein is Replication factor C small subunit of Thermoplasma acidophilum (strain ATCC 25905 / DSM 1728 / JCM 9062 / NBRC 15155 / AMRC-C165).